We begin with the raw amino-acid sequence, 300 residues long: MQTDLSDSSLFNHKSVMTDEILVSVDQYPLISDNKLTAIDATLGGGGHSYQLLKKYPDLKIIGLDHDPFARQSAFIKLEEFKSRIEICPSNFANFEPKEKVSFVIADLGVNSNQIDNPQRGFSFQKDGPLDMRMNPLLEMNAEDLIETLNEKDLADLIFKFGDERLSRKISRRIKKDLQEKGKYSGTKDLAYSIAGCFPPKQRYRKIHPATRTFQALRIAVNKEIEALERFLELAPNWLLPGGIISIISFHSIEDRLVKNSFKGDERLKNLTKKPITPNEKEIENNKRSRSAKLRIAQLK.

Residues 46–48, aspartate 65, phenylalanine 92, aspartate 107, and glutamine 114 contribute to the S-adenosyl-L-methionine site; that span reads GGH.

This sequence belongs to the methyltransferase superfamily. RsmH family.

The protein localises to the cytoplasm. It carries out the reaction cytidine(1402) in 16S rRNA + S-adenosyl-L-methionine = N(4)-methylcytidine(1402) in 16S rRNA + S-adenosyl-L-homocysteine + H(+). Functionally, specifically methylates the N4 position of cytidine in position 1402 (C1402) of 16S rRNA. This chain is Ribosomal RNA small subunit methyltransferase H, found in Prochlorococcus marinus subsp. pastoris (strain CCMP1986 / NIES-2087 / MED4).